A 186-amino-acid chain; its full sequence is Elongation factor P (186 aa).

It belongs to the elongation factor P family.

The protein resides in the cytoplasm. It participates in protein biosynthesis; polypeptide chain elongation. Involved in peptide bond synthesis. Stimulates efficient translation and peptide-bond synthesis on native or reconstituted 70S ribosomes in vitro. Probably functions indirectly by altering the affinity of the ribosome for aminoacyl-tRNA, thus increasing their reactivity as acceptors for peptidyl transferase. The chain is Elongation factor P from Shewanella loihica (strain ATCC BAA-1088 / PV-4).